We begin with the raw amino-acid sequence, 312 residues long: Dihydroorotate dehydrogenase B (NAD(+)), catalytic subunit (312 aa).

Residues Ser-23 and 47–48 (KA) contribute to the FMN site. Residues Lys-47 and 71–75 (NAIGL) contribute to the substrate site. FMN-binding residues include Asn-103 and Asn-131. Residue Asn-131 participates in substrate binding. The Nucleophile role is filled by Cys-134. Residues Lys-171 and Ile-197 each contribute to the FMN site. 198-199 (NT) lines the substrate pocket. FMN is bound by residues Gly-223, 249 to 250 (GG), and 271 to 272 (GT).

Belongs to the dihydroorotate dehydrogenase family. Type 1 subfamily. Heterotetramer of 2 PyrK and 2 PyrD type B subunits. Requires FMN as cofactor.

The protein resides in the cytoplasm. The enzyme catalyses (S)-dihydroorotate + NAD(+) = orotate + NADH + H(+). The protein operates within pyrimidine metabolism; UMP biosynthesis via de novo pathway; orotate from (S)-dihydroorotate (NAD(+) route): step 1/1. Catalyzes the conversion of dihydroorotate to orotate with NAD(+) as electron acceptor. This is Dihydroorotate dehydrogenase B (NAD(+)), catalytic subunit (pyrDB) from Streptococcus pneumoniae serotype 4 (strain ATCC BAA-334 / TIGR4).